The chain runs to 1040 residues: Multidrug resistance protein MdtB (1040 aa).

Helical transmembrane passes span 16–36, 347–367, 369–389, 396–416, 440–460, 472–492, 537–557, 863–883, 888–908, 911–931, 968–988, and 998–1018; these read FILRPVATTLLMVAILLAGII, LMLAIALVVMIIYLFLRNIPA, IIPAVAVPLSLVGTFAVMVFL, LTLMALTIATGFVVDDAIVVI, IGFTIISLTFSLIAVLIPLLF, FAVTLAVAILISAVVSLTLTP, WLTLGVALGTLALTVLLWIFI, LGSTLWLILASVVAMYIVLGV, FIHPITILSTLPTAGVGALLA, IAGAELDVIAIIGIILLIGIV, ILMTTLAALLGALPLMLSTGV, and IGMVGGLLVSQVLTLFTTPVI.

The protein belongs to the resistance-nodulation-cell division (RND) (TC 2.A.6) family. MdtB subfamily. Part of a tripartite efflux system composed of MdtA, MdtB and MdtC. MdtB forms a heteromultimer with MdtC.

The protein localises to the cell inner membrane. The protein is Multidrug resistance protein MdtB of Cronobacter sakazakii (strain ATCC BAA-894) (Enterobacter sakazakii).